The following is a 349-amino-acid chain: AA9 family lytic polysaccharide monooxygenase A (349 aa).

A signal peptide spans 1 to 19; it reads MKSTFGLLALAAAAKLVSA. Residues His-20 and His-102 each coordinate Cu(2+). Cys-62 and Cys-183 are joined by a disulfide. His-169 is a binding site for O2. Tyr-180 serves as a coordination point for Cu(2+). The interval 233–304 is disordered; the sequence is DGSSSGSSGS…SGSNSGSDSC (72 aa). Composition is skewed to low complexity over residues 234-262 and 269-304; these read GSSS…AVPT and TSAT…SDSC. Residues 311–347 enclose the CBM1 domain; the sequence is GSVKIYGQCGGQNYSGPTSCEAGLICKEWNPYYHQCV. Asn-323 is a glycosylation site (N-linked (GlcNAc...) asparagine).

This sequence belongs to the polysaccharide monooxygenase AA9 family. Cu(2+) serves as cofactor.

Its subcellular location is the secreted. The catalysed reaction is [(1-&gt;4)-beta-D-glucosyl]n+m + reduced acceptor + O2 = 4-dehydro-beta-D-glucosyl-[(1-&gt;4)-beta-D-glucosyl]n-1 + [(1-&gt;4)-beta-D-glucosyl]m + acceptor + H2O.. Lytic polysaccharide monooxygenase (LPMO) that depolymerizes crystalline and amorphous polysaccharides via the oxidation of scissile alpha- or beta-(1-4)-glycosidic bonds, yielding C4 oxidation products. Catalysis by LPMOs requires the reduction of the active-site copper from Cu(II) to Cu(I) by a reducing agent and H(2)O(2) or O(2) as a cosubstrate. The polypeptide is AA9 family lytic polysaccharide monooxygenase A (eglD) (Aspergillus fumigatus (strain CBS 144.89 / FGSC A1163 / CEA10) (Neosartorya fumigata)).